We begin with the raw amino-acid sequence, 598 residues long: (+)-bornyl diphosphate synthase, chloroplastic (598 aa).

The N-terminal 54 residues, 1-54 (MSIISMNVSILSKPLNCLHNLERRPSKALLVPCTAPTARLRASCSSKLQEAHQI), are a transit peptide targeting the chloroplast. R314 provides a ligand contact to substrate. Mg(2+)-binding residues include D351 and D355. A DDXXD motif motif is present at residues 351 to 355 (DDIYD). R493 lines the substrate pocket. D496, T500, and E504 together coordinate Mg(2+). Residue T500 participates in substrate binding. Substrate is bound at residue K512.

This sequence belongs to the terpene synthase family. As to quaternary structure, homodimer. Requires Mg(2+) as cofactor.

The protein resides in the plastid. It localises to the chloroplast. The enzyme catalyses (2E)-geranyl diphosphate = (2S,4R)-bornyl diphosphate. It catalyses the reaction (2E)-geranyl diphosphate = (1R,4S)-camphene + diphosphate. It carries out the reaction (2E)-geranyl diphosphate = (1R,5R)-alpha-pinene + diphosphate. It participates in terpene metabolism; (R)-camphor biosynthesis. In terms of biological role, catalyzes the formation of the (+)-camphor precursor (+)-bornyl diphosphate from geranyl diphosphate. The enzyme also produces significant amounts of (+)-alpha-pinene, (+)-camphene, and (+-)-limonene. The polypeptide is (+)-bornyl diphosphate synthase, chloroplastic (Salvia officinalis (Sage)).